The following is a 112-amino-acid chain: MPDYLVTLESAWYIKEAKTLDDAIGIAISEAGKRLNPSAKFVEVEAGMLACPFCERELSSAIVVADTALVGLILEMKVFRAESKEHASRIAKSVIGKALHEIPLKLLDVQEL.

This sequence belongs to the UPF0212 family.

In Methanoregula boonei (strain DSM 21154 / JCM 14090 / 6A8), this protein is UPF0212 protein Mboo_1659.